Here is a 185-residue protein sequence, read N- to C-terminus: Elongation factor P (185 aa).

It belongs to the elongation factor P family.

The protein resides in the cytoplasm. It participates in protein biosynthesis; polypeptide chain elongation. Its function is as follows. Involved in peptide bond synthesis. Stimulates efficient translation and peptide-bond synthesis on native or reconstituted 70S ribosomes in vitro. Probably functions indirectly by altering the affinity of the ribosome for aminoacyl-tRNA, thus increasing their reactivity as acceptors for peptidyl transferase. The chain is Elongation factor P from Staphylococcus aureus (strain Mu3 / ATCC 700698).